A 382-amino-acid chain; its full sequence is MLIKVKSAVSWMRARLSAISLADIQKHLAKIIILAPMAVLLIYLAIFSQPRYMSESKVAIKRSDDLNSGSLNFGLLLGASNPSSAEDALYLKEYINSPDMLAALDKQLNFREAFSHSGLDFLNHLSKDETAEGFLKYYKDRINVSYDDKTGLLNIQTQGFSPEFALKFNQTVLKESERFINEMSHRIARDQLAFAETEMEKARQRLDASKAELLSYQDNNNVLDPQAQAQAASTLVNTLMGQKIQMEADLRNLLTYLREDAPQVVSARNAIQSLQAQIDEEKSKITAPQGDKLNRMAVDFEEIKSKVEFNTELYKLTLTSIEKTRVEAARKLKVLSVISSPQLPQESSFPNIPYLIACWLLVCCLLFGTLKLLLAVIEDHRD.

2 helical membrane-spanning segments follow: residues 28-48 and 357-377; these read LAKI…AIFS and ACWL…LAVI.

The protein belongs to the BexC/CtrB/KpsE family.

It localises to the cell inner membrane. Involved in the translocation of the polysialic acid capsule. This chain is Capsule polysaccharide export inner-membrane protein KpsE (kpsE), found in Escherichia coli.